We begin with the raw amino-acid sequence, 1006 residues long: uncharacterized protein (1006 aa).

A disordered region spans residues 326 to 371 (EMEKKRPRSPELVPKKIVMEKERPSSPDSEAEEREHNLRIEKERHQ). Composition is skewed to basic and acidic residues over residues 338 to 350 (VPKKIVMEKERPS) and 358 to 371 (EREHNLRIEKERHQ). Coiled-coil stretches lie at residues 358–473 (EREH…ARLA) and 756–782 (EVQKQRAVDSLNSQYEKERNELDAFGR).

This is an uncharacterized protein from Caenorhabditis elegans.